The following is a 196-amino-acid chain: uncharacterized protein (196 aa).

This is an uncharacterized protein from Caenorhabditis elegans.